We begin with the raw amino-acid sequence, 418 residues long: Histidine--tRNA ligase (418 aa).

This sequence belongs to the class-II aminoacyl-tRNA synthetase family. In terms of assembly, homodimer.

Its subcellular location is the cytoplasm. It carries out the reaction tRNA(His) + L-histidine + ATP = L-histidyl-tRNA(His) + AMP + diphosphate + H(+). The protein is Histidine--tRNA ligase of Thermoanaerobacter pseudethanolicus (strain ATCC 33223 / 39E) (Clostridium thermohydrosulfuricum).